Reading from the N-terminus, the 1254-residue chain is DNA-directed RNA polymerase subunit beta (1254 aa).

This sequence belongs to the RNA polymerase beta chain family. In terms of assembly, the RNAP catalytic core consists of 2 alpha, 1 beta, 1 beta' and 1 omega subunit. When a sigma factor is associated with the core the holoenzyme is formed, which can initiate transcription.

The catalysed reaction is RNA(n) + a ribonucleoside 5'-triphosphate = RNA(n+1) + diphosphate. DNA-dependent RNA polymerase catalyzes the transcription of DNA into RNA using the four ribonucleoside triphosphates as substrates. In Protochlamydia amoebophila (strain UWE25), this protein is DNA-directed RNA polymerase subunit beta.